Reading from the N-terminus, the 523-residue chain is MSQQVIIFDTTLRDGEQALQASLSVKEKLQIALALERMGVDVMEVGFPVSSPGDFESVQTIARQVKNSRVCALARCVEKDIDVAAESLKVAEAFRIHTFIATSPMHIATKLRSTLDEVIERAVYMVKRARNYTDDVEFSCEDAGRTPIADLARVVEAAINAGATTINIPDTVGYTLPFEFSNIISGLYERVPNIDKAVISVHTHDDLGMAVGNALAAVQAGARQVEGTLNGIGERAGNCALEEVIMAIKLRQNLMNVHTRINHQEIWRTSQTVSQICNMPIPANKAVVGSGAFAHSSGIHQDGVLKNRENYEIMTPESIGLNQVQLNLTSRSGRAAVKHRMEEMGYHENDYNLDDLYDAFLKLADKKGQVFDYDLEALAFINKQQEEPEHFRLEYFSVQSGSNAMATASVKLACGEEIKAEAANGNGPVDAVYQAINRITDYDIELVKYQLGAKGHGKNALGQVDIVVSYNGRHFHGVGLTTDIVESSARAMINVLNNIWRAGEVEKELQRKAQNKEHNQETV.

The Pyruvate carboxyltransferase domain occupies 5–267; that stretch reads VIIFDTTLRD…HTRINHQEIW (263 aa). The Mn(2+) site is built by D14, H202, H204, and N238. The regulatory domain stretch occupies residues 392–523; it reads RLEYFSVQSG…QNKEHNQETV (132 aa).

The protein belongs to the alpha-IPM synthase/homocitrate synthase family. LeuA type 1 subfamily. Homodimer. It depends on Mn(2+) as a cofactor.

It localises to the cytoplasm. The catalysed reaction is 3-methyl-2-oxobutanoate + acetyl-CoA + H2O = (2S)-2-isopropylmalate + CoA + H(+). The protein operates within amino-acid biosynthesis; L-leucine biosynthesis; L-leucine from 3-methyl-2-oxobutanoate: step 1/4. In terms of biological role, catalyzes the condensation of the acetyl group of acetyl-CoA with 3-methyl-2-oxobutanoate (2-ketoisovalerate) to form 3-carboxy-3-hydroxy-4-methylpentanoate (2-isopropylmalate). This chain is 2-isopropylmalate synthase, found in Cronobacter sakazakii (strain ATCC BAA-894) (Enterobacter sakazakii).